A 341-amino-acid chain; its full sequence is Dihydroorotate dehydrogenase (quinone) (341 aa).

Residues 61–65 (AGLDK) and Thr-85 contribute to the FMN site. Lys-65 provides a ligand contact to substrate. 110–114 (NRMGF) is a substrate binding site. FMN-binding residues include Asn-138 and Asn-171. Position 171 (Asn-171) interacts with substrate. The active-site Nucleophile is Ser-174. Asn-176 is a binding site for substrate. Residues Lys-216 and Thr-244 each contribute to the FMN site. Position 245–246 (245–246 (NT)) interacts with substrate. FMN is bound by residues Gly-267, Gly-296, and 317–318 (YS).

This sequence belongs to the dihydroorotate dehydrogenase family. Type 2 subfamily. Monomer. Requires FMN as cofactor.

It localises to the cell membrane. It carries out the reaction (S)-dihydroorotate + a quinone = orotate + a quinol. It functions in the pathway pyrimidine metabolism; UMP biosynthesis via de novo pathway; orotate from (S)-dihydroorotate (quinone route): step 1/1. Functionally, catalyzes the conversion of dihydroorotate to orotate with quinone as electron acceptor. The protein is Dihydroorotate dehydrogenase (quinone) of Pseudomonas putida (strain W619).